Consider the following 203-residue polypeptide: Small ribosomal subunit protein uS4c (203 aa).

Residues 91-159 (MRLDNIIFRL…ISKNIEFYQK (69 aa)) form the S4 RNA-binding domain.

This sequence belongs to the universal ribosomal protein uS4 family. As to quaternary structure, part of the 30S ribosomal subunit. Contacts protein S5. The interaction surface between S4 and S5 is involved in control of translational fidelity.

The protein resides in the plastid. It is found in the chloroplast. In terms of biological role, one of the primary rRNA binding proteins, it binds directly to 16S rRNA where it nucleates assembly of the body of the 30S subunit. Its function is as follows. With S5 and S12 plays an important role in translational accuracy. In Lopidium concinnum (Moss), this protein is Small ribosomal subunit protein uS4c (rps4).